The following is a 1546-amino-acid chain: Hybrid signal transduction histidine kinase D (1546 aa).

The stretch at 36-63 forms a coiled coil; it reads MRKQKPDHEKTREELIEEINHLRAVSNS. Residues 65–131 enclose the PAS domain; the sequence is KNARIMLDEM…NIDNVREAVH (67 aa). Positions 139–193 constitute a PAC domain; sequence IRYETEIFGKSAGTEKITIDFSLMPLFNDKGEVSLILPEGRNITEKRLGELEIER. The region spanning 218–440 is the Histidine kinase 1 domain; the sequence is NVSHELRTPL…QFTLRLPLTP (223 aa). Position 221 is a phosphohistidine; by autocatalysis (His-221). The Response regulatory 1 domain occupies 571 to 686; it reads IVLVVEDNPE…ELVARVVNLM (116 aa). Asp-619 bears the 4-aspartylphosphate mark. In terms of domain architecture, Histidine kinase 2 spans 747–1010; sequence NLSHELRTPL…QFTVVLPIIK (264 aa). At His-750 the chain carries Phosphohistidine; by autocatalysis. Low complexity-rich tracts occupy residues 1013-1031 and 1042-1146; these read SSSN…SPPL and NYIN…SNNN. 3 disordered regions span residues 1013–1148, 1266–1285, and 1313–1350; these read SSSN…NNEK, NNSN…PPSS, and PLSE…KANS. Low complexity predominate over residues 1313–1346; that stretch reads PLSELKSSSNNNNNNNNNSNNNNNNSMSPNLRSP. The region spanning 1359 to 1483 is the Response regulatory 2 domain; it reads QIMLVDDLEE…ELSNSILTLI (125 aa). 4-aspartylphosphate is present on Asp-1412. The segment at 1500 to 1546 is disordered; sequence QNNNNNNNNNNNNNNNNNNNNNNINNGNDDDSLLLTDSRPCKKANSQ. Residues 1501-1526 are compositionally biased toward low complexity; that stretch reads NNNNNNNNNNNNNNNNNNNNNNINNG.

It catalyses the reaction ATP + protein L-histidine = ADP + protein N-phospho-L-histidine.. In terms of biological role, acts as a receptor histidine kinase for a signal transduction pathway. This protein undergoes an ATP-dependent autophosphorylation at a conserved histidine residue in the kinase core, and a phosphoryl group is then transferred to a conserved aspartate residue in the receiver domain. In Dictyostelium discoideum (Social amoeba), this protein is Hybrid signal transduction histidine kinase D (dhkD).